A 425-amino-acid chain; its full sequence is C2H2 type master regulator of conidiophore development brlA (425 aa).

Disordered regions lie at residues 28 to 72 (MASS…RHTG), 232 to 257 (KTHS…PMSR), and 281 to 301 (VQRQ…SLSL). Residues 30 to 44 (SSFSPMESPTPTPTS) show a composition bias toward low complexity. The segment covering 232–256 (KTHSPTTPVRSCSLGTTSGTDTPMS) has biased composition (polar residues). A compositionally biased stretch (basic residues) spans 285 to 294 (PSRKVARKQS). 2 C2H2-type zinc fingers span residues 321 to 345 (KGRF…PHVC) and 351 to 376 (ERAF…GRNR). The span at 365-374 (TKTHSKRGGR) shows a compositional bias: basic residues. The segment at 365 to 425 (TKTHSKRGGR…RETSEEAWLE (61 aa)) is disordered.

The protein resides in the nucleus. In terms of biological role, brlA, abaA and wetA are pivotal regulators of conidiophore development and conidium maturation. They act individually and together to regulate their own expression and that of numerous other sporulation-specific genes. Binds promoters of target genes at brlA response elements (BREs) containing the conserved sequence 5'-(C/A)(A/G)AGGG(G/A)-3'. Also coordinates the expression of carbohydrate-active enzymes and of the key effectors of cell wall remodeling during autolysis. The sequence is that of C2H2 type master regulator of conidiophore development brlA from Aspergillus niger (strain ATCC MYA-4892 / CBS 513.88 / FGSC A1513).